The primary structure comprises 1282 residues: Indigoidine synthase (1282 aa).

Positions 24-379 are adenylation; the sequence is AQRVAEHPEA…GGIQLARGYL (356 aa). In terms of domain architecture, Carrier spans 937 to 1012; it reads APRTETEKEI…KLARRLEREV (76 aa). Position 972 is an O-(pantetheine 4'-phosphoryl)serine (Ser-972). Residues 1030–1138 form a thioesterase region; sequence RPVICWPGLG…APGSPKVRAE (109 aa).

Belongs to the ATP-dependent AMP-binding enzyme family. Requires pantetheine 4'-phosphate as cofactor.

The catalysed reaction is 2 FMN + 2 L-glutamine + 2 ATP + O2 = indigoidine + 2 FMNH2 + 2 AMP + 2 diphosphate + 2 H2O. The enzyme catalyses FMN + L-glutamine + ATP = 3-amino-1,5-dihydropyridine-2,6-dione + FMNH2 + AMP + diphosphate. It carries out the reaction 2 3-amino-1,5-dihydropyridine-2,6-dione + O2 = indigoidine + 2 H2O. It participates in pigment biosynthesis. Nonribosomal peptide synthetase involved in the biosynthesis of the blue pigment indigoidine. Catalyzes the synthesis of the blue pigment using L-Gln as a substrate. Two glutamine molecules are cyclized and oxidized to form indigoidine. This is Indigoidine synthase from Streptomyces lavendulae.